Reading from the N-terminus, the 119-residue chain is Protein TusC (119 aa).

This sequence belongs to the DsrF/TusC family. Heterohexamer, formed by a dimer of trimers. The hexameric TusBCD complex contains 2 copies each of TusB, TusC and TusD. The TusBCD complex interacts with TusE.

The protein resides in the cytoplasm. Its function is as follows. Part of a sulfur-relay system required for 2-thiolation of 5-methylaminomethyl-2-thiouridine (mnm(5)s(2)U) at tRNA wobble positions. The protein is Protein TusC of Buchnera aphidicola subsp. Schizaphis graminum (strain Sg).